Consider the following 274-residue polypeptide: 4-diphosphocytidyl-2-C-methyl-D-erythritol kinase (274 aa).

Lys7 is an active-site residue. Residue 90-100 (PMGGGLGGGSS) participates in ATP binding. Asp132 is an active-site residue.

This sequence belongs to the GHMP kinase family. IspE subfamily.

The enzyme catalyses 4-CDP-2-C-methyl-D-erythritol + ATP = 4-CDP-2-C-methyl-D-erythritol 2-phosphate + ADP + H(+). The protein operates within isoprenoid biosynthesis; isopentenyl diphosphate biosynthesis via DXP pathway; isopentenyl diphosphate from 1-deoxy-D-xylulose 5-phosphate: step 3/6. Functionally, catalyzes the phosphorylation of the position 2 hydroxy group of 4-diphosphocytidyl-2C-methyl-D-erythritol. The chain is 4-diphosphocytidyl-2-C-methyl-D-erythritol kinase from Dechloromonas aromatica (strain RCB).